The primary structure comprises 258 residues: Imidazole glycerol phosphate synthase subunit HisF (258 aa).

Active-site residues include aspartate 12 and aspartate 131.

The protein belongs to the HisA/HisF family. As to quaternary structure, heterodimer of HisH and HisF.

The protein resides in the cytoplasm. It catalyses the reaction 5-[(5-phospho-1-deoxy-D-ribulos-1-ylimino)methylamino]-1-(5-phospho-beta-D-ribosyl)imidazole-4-carboxamide + L-glutamine = D-erythro-1-(imidazol-4-yl)glycerol 3-phosphate + 5-amino-1-(5-phospho-beta-D-ribosyl)imidazole-4-carboxamide + L-glutamate + H(+). The protein operates within amino-acid biosynthesis; L-histidine biosynthesis; L-histidine from 5-phospho-alpha-D-ribose 1-diphosphate: step 5/9. IGPS catalyzes the conversion of PRFAR and glutamine to IGP, AICAR and glutamate. The HisF subunit catalyzes the cyclization activity that produces IGP and AICAR from PRFAR using the ammonia provided by the HisH subunit. This chain is Imidazole glycerol phosphate synthase subunit HisF, found in Corynebacterium glutamicum (strain R).